The sequence spans 291 residues: Phosphate import ATP-binding protein PstB (291 aa).

The interval 1 to 21 is disordered; it reads MANKQIIDKNDDLQAHTDRND. Positions 45 to 286 constitute an ABC transporter domain; it reads YSTKNLDLWY…PSDKQTEDYI (242 aa). 77–84 is an ATP binding site; the sequence is GPSGCGKS.

It belongs to the ABC transporter superfamily. Phosphate importer (TC 3.A.1.7) family. The complex is composed of two ATP-binding proteins (PstB), two transmembrane proteins (PstC and PstA) and a solute-binding protein (PstS).

It localises to the cell membrane. It catalyses the reaction phosphate(out) + ATP + H2O = ADP + 2 phosphate(in) + H(+). Its function is as follows. Part of the ABC transporter complex PstSACB involved in phosphate import. Responsible for energy coupling to the transport system. This is Phosphate import ATP-binding protein PstB from Staphylococcus saprophyticus subsp. saprophyticus (strain ATCC 15305 / DSM 20229 / NCIMB 8711 / NCTC 7292 / S-41).